The following is a 1009-amino-acid chain: Type VII secretion system accessory factor EsaA (1009 aa).

The next 6 helical transmembrane spans lie at 7–27 (IYAL…IFFV), 822–842 (ISPT…AYIF), 869–889 (VITS…VGLI), 903–923 (KFIL…TYLL), 928–948 (SIGM…MNNL), and 979–999 (IGLA…LNMF).

It belongs to the EsaA family. As to quaternary structure, homodimer. Interacts with EssB.

The protein resides in the cell membrane. Functionally, component of the type VII secretion system (Ess). Provides together with EssB and other components such as EssC and EssE a secretion platform across the cytoplasmic membrane in the host. This Staphylococcus aureus (strain Mu50 / ATCC 700699) protein is Type VII secretion system accessory factor EsaA.